Here is a 148-residue protein sequence, read N- to C-terminus: NADPH-dependent 7-cyano-7-deazaguanine reductase (148 aa).

The Thioimide intermediate role is filled by C50. The active-site Proton donor is the D57. Substrate is bound by residues 72–74 (VES) and 91–92 (HE).

The protein belongs to the GTP cyclohydrolase I family. QueF type 1 subfamily.

Its subcellular location is the cytoplasm. It catalyses the reaction 7-aminomethyl-7-carbaguanine + 2 NADP(+) = 7-cyano-7-deazaguanine + 2 NADPH + 3 H(+). Its pathway is tRNA modification; tRNA-queuosine biosynthesis. Its function is as follows. Catalyzes the NADPH-dependent reduction of 7-cyano-7-deazaguanine (preQ0) to 7-aminomethyl-7-deazaguanine (preQ1). This is NADPH-dependent 7-cyano-7-deazaguanine reductase from Helicobacter pylori (strain J99 / ATCC 700824) (Campylobacter pylori J99).